A 349-amino-acid chain; its full sequence is Farnesyl pyrophosphate synthase (349 aa).

The isopentenyl diphosphate site is built by lysine 48, arginine 51, and glutamine 90. Positions 97 and 101 each coordinate Mg(2+). Arginine 106 lines the dimethylallyl diphosphate pocket. Position 107 (arginine 107) interacts with isopentenyl diphosphate. Residues lysine 194, threonine 195, glutamine 234, lysine 251, and lysine 260 each contribute to the dimethylallyl diphosphate site.

This sequence belongs to the FPP/GGPP synthase family. It depends on Mg(2+) as a cofactor.

The protein resides in the cytoplasm. It catalyses the reaction isopentenyl diphosphate + dimethylallyl diphosphate = (2E)-geranyl diphosphate + diphosphate. The enzyme catalyses isopentenyl diphosphate + (2E)-geranyl diphosphate = (2E,6E)-farnesyl diphosphate + diphosphate. Its pathway is isoprenoid biosynthesis; farnesyl diphosphate biosynthesis; farnesyl diphosphate from geranyl diphosphate and isopentenyl diphosphate: step 1/1. It participates in isoprenoid biosynthesis; geranyl diphosphate biosynthesis; geranyl diphosphate from dimethylallyl diphosphate and isopentenyl diphosphate: step 1/1. Functionally, catalyzes the sequential condensation of isopentenyl pyrophosphate with the allylic pyrophosphates, dimethylallyl pyrophosphate, and then with the resultant geranylpyrophosphate to the ultimate product farnesyl pyrophosphate. The sequence is that of Farnesyl pyrophosphate synthase (FPS1) from Kluyveromyces lactis (strain ATCC 8585 / CBS 2359 / DSM 70799 / NBRC 1267 / NRRL Y-1140 / WM37) (Yeast).